A 381-amino-acid polypeptide reads, in one-letter code: tRNA-specific 2-thiouridylase MnmA (381 aa).

ATP is bound by residues 14 to 21 (AMSGGVDS) and M40. The Nucleophile role is filled by C108. A disulfide bridge connects residues C108 and C205. Residue G132 participates in ATP binding. Residues 155 to 157 (KDQ) form an interaction with tRNA region. Catalysis depends on C205, which acts as the Cysteine persulfide intermediate. The segment at 309 to 310 (RY) is interaction with tRNA.

Belongs to the MnmA/TRMU family.

Its subcellular location is the cytoplasm. It catalyses the reaction S-sulfanyl-L-cysteinyl-[protein] + uridine(34) in tRNA + AH2 + ATP = 2-thiouridine(34) in tRNA + L-cysteinyl-[protein] + A + AMP + diphosphate + H(+). Functionally, catalyzes the 2-thiolation of uridine at the wobble position (U34) of tRNA, leading to the formation of s(2)U34. The protein is tRNA-specific 2-thiouridylase MnmA of Deinococcus geothermalis (strain DSM 11300 / CIP 105573 / AG-3a).